The following is a 214-amino-acid chain: NADH-quinone oxidoreductase subunit C (214 aa).

It belongs to the complex I 30 kDa subunit family. As to quaternary structure, NDH-1 is composed of 14 different subunits. Subunits NuoB, C, D, E, F, and G constitute the peripheral sector of the complex.

Its subcellular location is the cell inner membrane. It catalyses the reaction a quinone + NADH + 5 H(+)(in) = a quinol + NAD(+) + 4 H(+)(out). NDH-1 shuttles electrons from NADH, via FMN and iron-sulfur (Fe-S) centers, to quinones in the respiratory chain. The immediate electron acceptor for the enzyme in this species is believed to be ubiquinone. Couples the redox reaction to proton translocation (for every two electrons transferred, four hydrogen ions are translocated across the cytoplasmic membrane), and thus conserves the redox energy in a proton gradient. This is NADH-quinone oxidoreductase subunit C from Francisella tularensis subsp. mediasiatica (strain FSC147).